The sequence spans 137 residues: Endoribonuclease YbeY (137 aa).

3 residues coordinate Zn(2+): H105, H109, and D115.

This sequence belongs to the endoribonuclease YbeY family. Zn(2+) is required as a cofactor.

The protein resides in the cytoplasm. Functionally, single strand-specific metallo-endoribonuclease involved in late-stage 70S ribosome quality control and in maturation of the 3' terminus of the 16S rRNA. In Chlorobium luteolum (strain DSM 273 / BCRC 81028 / 2530) (Pelodictyon luteolum), this protein is Endoribonuclease YbeY.